The chain runs to 515 residues: Rop guanine nucleotide exchange factor 12 (515 aa).

A PRONE domain is found at 83 to 446 (QARERQLLAD…RAGNKRNTPL (364 aa)). Ser510 carries the post-translational modification Phosphoserine.

In terms of assembly, interacts (via C-terminus) with PRK2. Interacts with PRK6. In terms of tissue distribution, expressed in pollen grains.

It localises to the cytoplasm. It is found in the cell membrane. With respect to regulation, phosphorylation at Ser-510 by PRK2 may release ROPGEF12 auto-inhibition, thereby activating ROPGEF12 and downstream Rop signaling. Guanine-nucleotide exchange factor (GEF) that acts as an activator of Rop (Rho of plants) GTPases by promoting the exchange of GDP for GTP. May be recruited by PRK2 at the plasma membrane to maintain polar Rop activity in the pollen tube and control polarized pollen tube growth. This chain is Rop guanine nucleotide exchange factor 12, found in Arabidopsis thaliana (Mouse-ear cress).